The following is a 201-amino-acid chain: Protein GrpE (201 aa).

Belongs to the GrpE family. In terms of assembly, homodimer.

The protein resides in the cytoplasm. Its function is as follows. Participates actively in the response to hyperosmotic and heat shock by preventing the aggregation of stress-denatured proteins, in association with DnaK and GrpE. It is the nucleotide exchange factor for DnaK and may function as a thermosensor. Unfolded proteins bind initially to DnaJ; upon interaction with the DnaJ-bound protein, DnaK hydrolyzes its bound ATP, resulting in the formation of a stable complex. GrpE releases ADP from DnaK; ATP binding to DnaK triggers the release of the substrate protein, thus completing the reaction cycle. Several rounds of ATP-dependent interactions between DnaJ, DnaK and GrpE are required for fully efficient folding. This is Protein GrpE from Shewanella frigidimarina (strain NCIMB 400).